A 496-amino-acid polypeptide reads, in one-letter code: Alanine aminotransferase 1 (496 aa).

Alanine 2 carries the N-acetylalanine modification. Residue threonine 22 is modified to Phosphothreonine. Lysine 314 is subject to N6-(pyridoxal phosphate)lysine.

This sequence belongs to the class-I pyridoxal-phosphate-dependent aminotransferase family. Alanine aminotransferase subfamily. In terms of assembly, homodimer. The cofactor is pyridoxal 5'-phosphate.

Its subcellular location is the cytoplasm. It catalyses the reaction L-alanine + 2-oxoglutarate = pyruvate + L-glutamate. It participates in amino-acid degradation; L-alanine degradation via transaminase pathway; pyruvate from L-alanine: step 1/1. Its function is as follows. Catalyzes the reversible transamination between alanine and 2-oxoglutarate to form pyruvate and glutamate. Participates in cellular nitrogen metabolism and also in liver gluconeogenesis starting with precursors transported from skeletal muscles. The protein is Alanine aminotransferase 1 (GPT) of Bos taurus (Bovine).